We begin with the raw amino-acid sequence, 404 residues long: Deoxyguanosinetriphosphate triphosphohydrolase-like protein (404 aa).

One can recognise an HD domain in the interval 69-217 (RLTHSLEVAQ…AGIADDIAYD (149 aa)).

Belongs to the dGTPase family. Type 2 subfamily.

This Rhodopseudomonas palustris (strain BisB18) protein is Deoxyguanosinetriphosphate triphosphohydrolase-like protein.